The following is a 71-amino-acid chain: DNA-directed RNA polymerase subunit epsilon (71 aa).

It belongs to the RNA polymerase subunit epsilon family. In terms of assembly, RNAP is composed of a core of 2 alpha, a beta and a beta' subunit. The core is associated with a delta subunit, and at least one of epsilon or omega. When a sigma factor is associated with the core the holoenzyme is formed, which can initiate transcription.

The enzyme catalyses RNA(n) + a ribonucleoside 5'-triphosphate = RNA(n+1) + diphosphate. In terms of biological role, a non-essential component of RNA polymerase (RNAP). The chain is DNA-directed RNA polymerase subunit epsilon from Staphylococcus carnosus (strain TM300).